We begin with the raw amino-acid sequence, 203 residues long: Thymidylate kinase (203 aa).

10–17 (GIDGSGKS) is a binding site for ATP.

This sequence belongs to the thymidylate kinase family.

It catalyses the reaction dTMP + ATP = dTDP + ADP. Its function is as follows. Phosphorylation of dTMP to form dTDP in both de novo and salvage pathways of dTTP synthesis. The protein is Thymidylate kinase of Brachyspira hyodysenteriae (strain ATCC 49526 / WA1).